We begin with the raw amino-acid sequence, 689 residues long: Elongation factor G (689 aa).

The tr-type G domain occupies 8-282 (LNTRNIGIMA…AVVDYLPSPI (275 aa)). Residues 17 to 24 (AHIDAGKT), 81 to 85 (DTPGH), and 135 to 138 (NKMD) contribute to the GTP site.

This sequence belongs to the TRAFAC class translation factor GTPase superfamily. Classic translation factor GTPase family. EF-G/EF-2 subfamily.

The protein resides in the cytoplasm. Catalyzes the GTP-dependent ribosomal translocation step during translation elongation. During this step, the ribosome changes from the pre-translocational (PRE) to the post-translocational (POST) state as the newly formed A-site-bound peptidyl-tRNA and P-site-bound deacylated tRNA move to the P and E sites, respectively. Catalyzes the coordinated movement of the two tRNA molecules, the mRNA and conformational changes in the ribosome. This Mycoplasma capricolum subsp. capricolum (strain California kid / ATCC 27343 / NCTC 10154) protein is Elongation factor G.